The following is a 79-amino-acid chain: Acyl carrier protein (79 aa).

Residues 4–79 (AEIKDKVYDI…QAIDYIVNKK (76 aa)) enclose the Carrier domain. At serine 39 the chain carries O-(pantetheine 4'-phosphoryl)serine.

This sequence belongs to the acyl carrier protein (ACP) family. In terms of processing, 4'-phosphopantetheine is transferred from CoA to a specific serine of apo-ACP by AcpS. This modification is essential for activity because fatty acids are bound in thioester linkage to the sulfhydryl of the prosthetic group.

It localises to the cytoplasm. It participates in lipid metabolism; fatty acid biosynthesis. In terms of biological role, carrier of the growing fatty acid chain in fatty acid biosynthesis. This Chlorobaculum parvum (strain DSM 263 / NCIMB 8327) (Chlorobium vibrioforme subsp. thiosulfatophilum) protein is Acyl carrier protein.